The primary structure comprises 478 residues: Sulfate adenylyltransferase subunit 1 (478 aa).

Residues 24–240 (KSMLRFLTCG…VLEDIDIDAD (217 aa)) form the tr-type G domain. The interval 33–40 (GSVDDGKS) is G1. 33 to 40 (GSVDDGKS) is a binding site for GTP. The G2 stretch occupies residues 91 to 95 (GITID). Positions 112-115 (DTPG) are G3. GTP contacts are provided by residues 112 to 116 (DTPGH) and 167 to 170 (NKMD). Positions 167-170 (NKMD) are G4. The tract at residues 206–208 (SAL) is G5.

It belongs to the TRAFAC class translation factor GTPase superfamily. Classic translation factor GTPase family. CysN/NodQ subfamily. As to quaternary structure, heterodimer composed of CysD, the smaller subunit, and CysN.

It carries out the reaction sulfate + ATP + H(+) = adenosine 5'-phosphosulfate + diphosphate. It participates in sulfur metabolism; hydrogen sulfide biosynthesis; sulfite from sulfate: step 1/3. Its function is as follows. With CysD forms the ATP sulfurylase (ATPS) that catalyzes the adenylation of sulfate producing adenosine 5'-phosphosulfate (APS) and diphosphate, the first enzymatic step in sulfur assimilation pathway. APS synthesis involves the formation of a high-energy phosphoric-sulfuric acid anhydride bond driven by GTP hydrolysis by CysN coupled to ATP hydrolysis by CysD. The sequence is that of Sulfate adenylyltransferase subunit 1 from Aliivibrio salmonicida (strain LFI1238) (Vibrio salmonicida (strain LFI1238)).